We begin with the raw amino-acid sequence, 264 residues long: Small ribosomal subunit protein uS2 (264 aa).

Positions 228-264 are disordered; that stretch reads HEDVSAGPVEEQSDEAQAAEQGTEGDTAQLTSSQGRS. A compositionally biased stretch (polar residues) spans 251–264; that stretch reads EGDTAQLTSSQGRS.

It belongs to the universal ribosomal protein uS2 family.

In Deinococcus radiodurans (strain ATCC 13939 / DSM 20539 / JCM 16871 / CCUG 27074 / LMG 4051 / NBRC 15346 / NCIMB 9279 / VKM B-1422 / R1), this protein is Small ribosomal subunit protein uS2.